The primary structure comprises 87 residues: Exodeoxyribonuclease 7 small subunit (87 aa).

It belongs to the XseB family. As to quaternary structure, heterooligomer composed of large and small subunits.

The protein localises to the cytoplasm. It carries out the reaction Exonucleolytic cleavage in either 5'- to 3'- or 3'- to 5'-direction to yield nucleoside 5'-phosphates.. Its function is as follows. Bidirectionally degrades single-stranded DNA into large acid-insoluble oligonucleotides, which are then degraded further into small acid-soluble oligonucleotides. The protein is Exodeoxyribonuclease 7 small subunit of Xanthomonas campestris pv. campestris (strain 8004).